Consider the following 160-residue polypeptide: Transcription elongation factor GreA (160 aa).

Residues Met1–Arg72 are a coiled coil.

It belongs to the GreA/GreB family.

Functionally, necessary for efficient RNA polymerase transcription elongation past template-encoded arresting sites. The arresting sites in DNA have the property of trapping a certain fraction of elongating RNA polymerases that pass through, resulting in locked ternary complexes. Cleavage of the nascent transcript by cleavage factors such as GreA or GreB allows the resumption of elongation from the new 3'terminus. GreA releases sequences of 2 to 3 nucleotides. The polypeptide is Transcription elongation factor GreA (Streptococcus sanguinis (strain SK36)).